Here is a 236-residue protein sequence, read N- to C-terminus: Biosynthetic peptidoglycan transglycosylase (236 aa).

The helical transmembrane segment at 20–40 (LVFIVLSVLILPYALIGLYLL) threads the bilayer.

Belongs to the glycosyltransferase 51 family.

It localises to the cell inner membrane. The catalysed reaction is [GlcNAc-(1-&gt;4)-Mur2Ac(oyl-L-Ala-gamma-D-Glu-L-Lys-D-Ala-D-Ala)](n)-di-trans,octa-cis-undecaprenyl diphosphate + beta-D-GlcNAc-(1-&gt;4)-Mur2Ac(oyl-L-Ala-gamma-D-Glu-L-Lys-D-Ala-D-Ala)-di-trans,octa-cis-undecaprenyl diphosphate = [GlcNAc-(1-&gt;4)-Mur2Ac(oyl-L-Ala-gamma-D-Glu-L-Lys-D-Ala-D-Ala)](n+1)-di-trans,octa-cis-undecaprenyl diphosphate + di-trans,octa-cis-undecaprenyl diphosphate + H(+). The protein operates within cell wall biogenesis; peptidoglycan biosynthesis. Functionally, peptidoglycan polymerase that catalyzes glycan chain elongation from lipid-linked precursors. This chain is Biosynthetic peptidoglycan transglycosylase, found in Rhizobium meliloti (strain 1021) (Ensifer meliloti).